A 410-amino-acid polypeptide reads, in one-letter code: LL-diaminopimelate aminotransferase (410 aa).

Substrate-binding residues include Tyr-15 and Gly-42. Pyridoxal 5'-phosphate is bound by residues Tyr-72, 108-109 (AK), Tyr-132, Asn-188, Tyr-219, and 247-249 (SFS). Substrate-binding residues include Lys-109, Tyr-132, and Asn-188. Lys-250 is modified (N6-(pyridoxal phosphate)lysine). Arg-258 and Asn-293 together coordinate pyridoxal 5'-phosphate. The substrate site is built by Asn-293 and Arg-389.

Belongs to the class-I pyridoxal-phosphate-dependent aminotransferase family. LL-diaminopimelate aminotransferase subfamily. In terms of assembly, homodimer. Pyridoxal 5'-phosphate serves as cofactor.

The catalysed reaction is (2S,6S)-2,6-diaminopimelate + 2-oxoglutarate = (S)-2,3,4,5-tetrahydrodipicolinate + L-glutamate + H2O + H(+). The protein operates within amino-acid biosynthesis; L-lysine biosynthesis via DAP pathway; LL-2,6-diaminopimelate from (S)-tetrahydrodipicolinate (aminotransferase route): step 1/1. Involved in the synthesis of meso-diaminopimelate (m-DAP or DL-DAP), required for both lysine and peptidoglycan biosynthesis. Catalyzes the direct conversion of tetrahydrodipicolinate to LL-diaminopimelate. The polypeptide is LL-diaminopimelate aminotransferase (Bacteroides thetaiotaomicron (strain ATCC 29148 / DSM 2079 / JCM 5827 / CCUG 10774 / NCTC 10582 / VPI-5482 / E50)).